Reading from the N-terminus, the 644-residue chain is Exoribonuclease 2 (644 aa).

One can recognise an RNB domain in the interval 189 to 516 (RQDLTALNFV…NHRLLKAVIK (328 aa)). An S1 motif domain is found at 561–643 (NTRFAAEIID…ETRSIIARPA (83 aa)).

The protein belongs to the RNR ribonuclease family. RNase II subfamily.

It is found in the cytoplasm. The enzyme catalyses Exonucleolytic cleavage in the 3'- to 5'-direction to yield nucleoside 5'-phosphates.. Functionally, involved in mRNA degradation. Hydrolyzes single-stranded polyribonucleotides processively in the 3' to 5' direction. In Salmonella enteritidis PT4 (strain P125109), this protein is Exoribonuclease 2.